The following is a 143-amino-acid chain: Small ribosomal subunit protein bS6 (143 aa).

The interval 96–143 is disordered; the sequence is VTEASPMAAAKEERRDDRREVKKDVAAAPVEAKEDSVEEKSEEAASEE. A compositionally biased stretch (basic and acidic residues) spans 105–143; the sequence is AKEERRDDRREVKKDVAAAPVEAKEDSVEEKSEEAASEE.

This sequence belongs to the bacterial ribosomal protein bS6 family.

Its function is as follows. Binds together with bS18 to 16S ribosomal RNA. The sequence is that of Small ribosomal subunit protein bS6 from Colwellia psychrerythraea (strain 34H / ATCC BAA-681) (Vibrio psychroerythus).